Reading from the N-terminus, the 373-residue chain is NAD-dependent protein deacylase SRT2 (373 aa).

Residues 1–47 (MNMRRVFGGVSTDLFPSRSMYRPLQSGGNLVMLFKGCRRFVRTTCRV) constitute a mitochondrion transit peptide. Residues 75–373 (DPPNMEDIHK…DVGSLSVPAL (299 aa)) enclose the Deacetylase sirtuin-type domain. Residues 100 to 120 (GAGV…GAYS) and 179 to 182 (QNVD) contribute to the NAD(+) site. The Proton acceptor role is filled by His196. Zn(2+) is bound by residues Cys204, Cys207, Cys271, and Cys274. NAD(+) is bound by residues 311-313 (GSS), 337-339 (NIG), and Val355.

The protein belongs to the sirtuin family. Class II subfamily. Binds to the promoter region of genes influenced by ethylene. Interacts with ENAP1; this interaction is enhanced in the presence of ethylene. It depends on Zn(2+) as a cofactor.

Its subcellular location is the mitochondrion matrix. The protein resides in the nucleus. It catalyses the reaction N(6)-acetyl-L-lysyl-[protein] + NAD(+) + H2O = 2''-O-acetyl-ADP-D-ribose + nicotinamide + L-lysyl-[protein]. Its function is as follows. NAD-dependent protein deacylase. Catalyzes the NAD-dependent hydrolysis of acyl groups from lysine residues. Involved in responses to ethylene leading to the transcriptional repression of some ethylene-responsive genes via the regulation of histone acetylation H3K9Ac. Negatively regulates plant basal defense against plant pathogens, possibly by suppressing salicylic acid biosynthesis. The polypeptide is NAD-dependent protein deacylase SRT2 (Arabidopsis thaliana (Mouse-ear cress)).